A 794-amino-acid chain; its full sequence is MEDVAELELQTTEPHAFFHASGVGERHLNGNEIIVEIQETVFVADGDGNMAVQGFGPDEGDSVVIQDVIEDVVIEDVQCSDILDGGRVSEAVIIPEQVLEDEVGTGEEEQVLEEDSLTSCDVPDNVLDPELVDGELTIPDPETGMHSVSGHVVIGEEITDDALEEDMISEEVLVADCVSEAVIDANGIPVHENDSEEVNCDDYLMISLDDAEKIDEDGAEEITMGSVVEGDSSKLDGSCPEVIKVYIFKADPGEEDLGGTVDIVESESENDHGDGFLDSHNGGRLPREKMVYMTVNDSQNDDDLDVAEIADEVYMEVIVGEEDAAVAHEHQLEDAELSKTFMPVAWAAAYGNNTDGIEHRNGTASALLHIDESDGLDRLTKQKLKKKRRGENRQYQTAIIIGPDGHPLTVYPCMICGKKFKSRGFLKRHMKNHPEHLVRKKYRCTDCDYTTNKKVSLHNHLESHKLTATVIKTEKDLECEECGKIFLHANALFAHKLTHNEKAGNKMHICKFCDYETAEQGLLNRHLLAVHSKSFPHICVECGKGFRHPSELKKHMRTHTGEKPYLCQYCDYRSADSSNLKTHVKTKHSKEMPFKCDICLQTFTDSKDLQEHAILHQESKNHQCLHCDHKSSNSSDLKRHIISVHTKDYPHKCEVCEKGFHRPSELKKHEAAHKGKKMHQCRHCEFHIADPFVLSRHILSVHTKELPYRCKRCKKGFRQQIELKKHMKTHSGKKVYQCEYCEYNTTDASGFKRHVISIHTKDYPHRCDYCKKGFRRPSEKNQHTLKHHKEASLM.

A Nuclear localization signal motif is present at residues 380–389 (TKQKLKKKRR). 13 consecutive C2H2-type zinc fingers follow at residues 411 to 433 (YPCM…MKNH), 442 to 464 (YRCT…LESH), 477 to 499 (LECE…KLTH), 508 to 531 (HICK…LAVH), 537 to 559 (HICV…MRTH), 565 to 588 (YLCQ…KTKH), 594 to 616 (FKCD…AILH), 622 to 645 (HQCL…ISVH), 651 to 673 (HKCE…EAAH), 679 to 702 (HQCR…LSVH), 708 to 730 (YRCK…MKTH), 736 to 759 (YQCE…ISIH), and 765 to 788 (HRCD…LKHH).

The protein belongs to the krueppel C2H2-type zinc-finger protein family. ZFX/ZFY subfamily.

It localises to the nucleus. Functionally, probable transcriptional activator. The protein is Zinc finger Y-chromosomal protein 1 (zfy1) of Xenopus laevis (African clawed frog).